Reading from the N-terminus, the 328-residue chain is RNA-binding protein KhpB (328 aa).

The segment at 3-53 is jag_N domain; sequence VFTGSTVEEAIQKGLKELDIPRMKAHIKVISREKKGFLGLFGKKPAQVDIE. Residues 54–180 are linker; that stretch reads AISETTVVKA…GLKVETNFDI (127 aa). Position 89 is a phosphothreonine (Thr89). The 78-residue stretch at 181–258 folds into the KH domain; sequence EQVATEVMAY…SRTFYVTINV (78 aa). Residues 263–328 enclose the R3H domain; the sequence is EHRAEVLQTY…PNRYVVVDTE (66 aa).

This sequence belongs to the KhpB RNA-binding protein family. As to quaternary structure, interacts with KhpA; the 2 proteins colocalize throughout the cell cycle, with some increase at midcell in dividing cells. Interacts with StkP which phosphorylates it, interacts with MltG, MreC, RodZ and YidC2. In terms of processing, phosphorylated on Thr-89 by StkP; there is another poorly phosphorylated residue in the protein. Dephosphorylated by PhpP.

It localises to the cytoplasm. A probable RNA chaperone. Forms a complex with KhpA which binds to cellular RNA and controls its expression. Plays a role in peptidoglycan (PG) homeostasis and cell length regulation. Functionally, forms a complex with KhpA which presumably binds to about 170 cellular RNAs (mRNA, tRNA intergenic RNA and sRNAs); the proteins alone each bind the same set of RNAs. Suppresses the requirement for PBP2b (penA, a transpeptidase) in peripheral peptidoglycan (PG) synthesis. May function as a pleiotropic RNA chaperone controlling pneumococcal cell division, including PG homeostasis and regulating peripheral PG synthesis by the elongasome. This is RNA-binding protein KhpB from Streptococcus pneumoniae serotype 2 (strain D39 / NCTC 7466).